Here is a 271-residue protein sequence, read N- to C-terminus: Aquaporin-1 (271 aa).

At 1 to 11 (MASEFKKKLFW) the chain is on the cytoplasmic side. A helical membrane pass occupies residues 12 to 29 (RAVVAEFLAMILFIFISI). Residues 30 to 48 (GSALGFHYPIKSNQTTGAV) are Extracellular-facing. Residue Asn42 is glycosylated (N-linked (GlcNAc...) asparagine). Residues 49–67 (QDNVKVSLAFGLSIATLAQ) form a helical membrane-spanning segment. At 68–70 (SVG) the chain is on the cytoplasmic side. The stretch at 71-84 (HISGAHLNPAVTLG) is an intramembrane region. The short motif at 78 to 80 (NPA) is the NPA 1 element. The Cytoplasmic portion of the chain corresponds to 85–92 (LLLSCQIS). A helical membrane pass occupies residues 93-111 (VLRAIMYIIAQCVGAIVAT). At 112-135 (AILSGITSSLPDNSLGLNALAPGV) the chain is on the extracellular side. Residues 136–155 (NSGQGLGIEIIGTLQLVLCV) traverse the membrane as a helical segment. Residues 156-165 (LATTDRRRRD) are Cytoplasmic-facing. A helical transmembrane segment spans residues 166 to 183 (LGGSGPLAIGFSVALGHL). Over 184 to 188 (LAIDY) the chain is Extracellular. The stretch at 189-201 (TGCGINPARSFGS) is an intramembrane region. An NPA 2 motif is present at residues 194–196 (NPA). The Extracellular portion of the chain corresponds to 202-208 (SVITHNF). Residues 209-226 (QDHWIFWVGPFIGAALAV) form a helical membrane-spanning segment. Residues 227 to 271 (LIYDFILAPRSSDLTDRVKVWTSGQVEEYDLDADDINSRVEMKPK) are Cytoplasmic-facing. At Ser249 the chain carries Phosphoserine. Tyr255 is subject to Phosphotyrosine. Phosphoserine is present on Ser264.

It belongs to the MIP/aquaporin (TC 1.A.8) family. In terms of assembly, homotetramer; each monomer provides an independent water pore. Component of the ankyrin-1 complex in the erythrocyte, composed of ANK1, RHCE, RHAG, SLC4A1, EPB42, GYPA, GYPB and AQP1. Interacts with EPHB2; involved in endolymph production in the inner ear. Identified in a complex with STOM. Interacts (via the N-terminal) with ANK1 (via ANK 1-5 repeats). Interacts (via the C-terminal) with EPB42.

It is found in the cell membrane. It carries out the reaction H2O(in) = H2O(out). It catalyses the reaction nitric oxide(out) = nitric oxide(in). The enzyme catalyses CO2(out) = CO2(in). The catalysed reaction is glycerol(in) = glycerol(out). It carries out the reaction H2O2(out) = H2O2(in). It catalyses the reaction K(+)(in) = K(+)(out). The enzyme catalyses Na(+)(in) = Na(+)(out). Its function is as follows. Forms a water channel that facilitates the transport of water across cell membranes, playing a crucial role in water homeostasis in various tissues. Could also be permeable to small solutes including hydrogen peroxide, glycerol and gases such as amonnia (NH3), nitric oxide (NO) and carbon dioxide (CO2). Recruited to the ankyrin-1 complex, a multiprotein complex of the erythrocyte membrane, it could be part of a CO2 metabolon, linking facilitated diffusion of CO2 across the membrane, anion exchange of Cl(-)/HCO3(-) and interconversion of dissolved CO2 and carbonic acid in the cytosol. In vitro, it shows non-selective gated cation channel activity and may be permeable to cations like K(+) and Na(+) in vivo. This Bos taurus (Bovine) protein is Aquaporin-1.